Here is a 330-residue protein sequence, read N- to C-terminus: 4-hydroxythreonine-4-phosphate dehydrogenase (330 aa).

Substrate contacts are provided by H134 and T135. Positions 164, 209, and 264 each coordinate a divalent metal cation. Substrate contacts are provided by K272, N281, and R290.

This sequence belongs to the PdxA family. Homodimer. The cofactor is Zn(2+). Mg(2+) is required as a cofactor. Requires Co(2+) as cofactor.

The protein localises to the cytoplasm. The enzyme catalyses 4-(phosphooxy)-L-threonine + NAD(+) = 3-amino-2-oxopropyl phosphate + CO2 + NADH. Its pathway is cofactor biosynthesis; pyridoxine 5'-phosphate biosynthesis; pyridoxine 5'-phosphate from D-erythrose 4-phosphate: step 4/5. In terms of biological role, catalyzes the NAD(P)-dependent oxidation of 4-(phosphooxy)-L-threonine (HTP) into 2-amino-3-oxo-4-(phosphooxy)butyric acid which spontaneously decarboxylates to form 3-amino-2-oxopropyl phosphate (AHAP). This is 4-hydroxythreonine-4-phosphate dehydrogenase from Pseudoalteromonas translucida (strain TAC 125).